Reading from the N-terminus, the 150-residue chain is Protein-export protein SecB (150 aa).

It belongs to the SecB family. As to quaternary structure, homotetramer, a dimer of dimers. One homotetramer interacts with 1 SecA dimer.

It localises to the cytoplasm. One of the proteins required for the normal export of preproteins out of the cell cytoplasm. It is a molecular chaperone that binds to a subset of precursor proteins, maintaining them in a translocation-competent state. It also specifically binds to its receptor SecA. The polypeptide is Protein-export protein SecB (Psychrobacter cryohalolentis (strain ATCC BAA-1226 / DSM 17306 / VKM B-2378 / K5)).